Reading from the N-terminus, the 179-residue chain is ATP synthase subunit delta (179 aa).

It belongs to the ATPase delta chain family. F-type ATPases have 2 components, F(1) - the catalytic core - and F(0) - the membrane proton channel. F(1) has five subunits: alpha(3), beta(3), gamma(1), delta(1), epsilon(1). F(0) has three main subunits: a(1), b(2) and c(10-14). The alpha and beta chains form an alternating ring which encloses part of the gamma chain. F(1) is attached to F(0) by a central stalk formed by the gamma and epsilon chains, while a peripheral stalk is formed by the delta and b chains.

The protein resides in the cell membrane. In terms of biological role, f(1)F(0) ATP synthase produces ATP from ADP in the presence of a proton or sodium gradient. F-type ATPases consist of two structural domains, F(1) containing the extramembraneous catalytic core and F(0) containing the membrane proton channel, linked together by a central stalk and a peripheral stalk. During catalysis, ATP synthesis in the catalytic domain of F(1) is coupled via a rotary mechanism of the central stalk subunits to proton translocation. Its function is as follows. This protein is part of the stalk that links CF(0) to CF(1). It either transmits conformational changes from CF(0) to CF(1) or is implicated in proton conduction. This is ATP synthase subunit delta from Clostridium beijerinckii (strain ATCC 51743 / NCIMB 8052) (Clostridium acetobutylicum).